Consider the following 428-residue polypeptide: Elongation factor 1-alpha (428 aa).

The tr-type G domain maps to 5-225 (KPILNVAFIG…DAFQPPEKPT (221 aa)). The tract at residues 14-21 (GHVDAGKS) is G1. A GTP-binding site is contributed by 14–21 (GHVDAGKS). Ser-21 is a binding site for Mg(2+). The tract at residues 70–74 (GVTID) is G2. The tract at residues 91–94 (DCPG) is G3. GTP-binding positions include 91 to 95 (DCPGH) and 149 to 152 (NKMD). Residues 149–152 (NKMD) form a G4 region. The G5 stretch occupies residues 189–191 (ASL).

This sequence belongs to the TRAFAC class translation factor GTPase superfamily. Classic translation factor GTPase family. EF-Tu/EF-1A subfamily.

It is found in the cytoplasm. It carries out the reaction GTP + H2O = GDP + phosphate + H(+). GTP hydrolase that promotes the GTP-dependent binding of aminoacyl-tRNA to the A-site of ribosomes during protein biosynthesis. This Methanococcus maripaludis (strain C7 / ATCC BAA-1331) protein is Elongation factor 1-alpha.